A 1330-amino-acid polypeptide reads, in one-letter code: ESX-3 secretion system protein EccC3 (1330 aa).

A run of 2 helical transmembrane segments spans residues 43 to 63 (LPYL…ATGM) and 65 to 85 (VISP…TALY). 3 FtsK domains span residues 456 to 662 (GEPL…SVSR), 811 to 1000 (RDPL…RDSN), and 1090 to 1280 (LAPV…ADSG). ATP contacts are provided by residues 479–486 (GMTGSGKS), 829–836 (GGPKSGKS), and 1107–1114 (GDARSGKT).

In terms of assembly, part of the ESX-3 / type VII secretion system (T7SS), which is composed of cytosolic and membrane components. The ESX-3 membrane complex is composed of EccB3, EccC3, EccD3 and EccE3.

It localises to the cell inner membrane. Its function is as follows. Part of the ESX-3 specialized secretion system, which is important for iron and zinc uptake or homeostasis. The chain is ESX-3 secretion system protein EccC3 from Mycobacterium tuberculosis (strain CDC 1551 / Oshkosh).